We begin with the raw amino-acid sequence, 205 residues long: Thymidylate kinase (205 aa).

10–17 (GIDGAGKS) is a binding site for ATP.

This sequence belongs to the thymidylate kinase family.

It carries out the reaction dTMP + ATP = dTDP + ADP. Its function is as follows. Phosphorylation of dTMP to form dTDP in both de novo and salvage pathways of dTTP synthesis. This is Thymidylate kinase from Ralstonia pickettii (strain 12J).